Here is a 93-residue protein sequence, read N- to C-terminus: Pyrimidine/purine nucleoside phosphorylase (93 aa).

This sequence belongs to the nucleoside phosphorylase PpnP family.

The enzyme catalyses a purine D-ribonucleoside + phosphate = a purine nucleobase + alpha-D-ribose 1-phosphate. The catalysed reaction is adenosine + phosphate = alpha-D-ribose 1-phosphate + adenine. It catalyses the reaction cytidine + phosphate = cytosine + alpha-D-ribose 1-phosphate. It carries out the reaction guanosine + phosphate = alpha-D-ribose 1-phosphate + guanine. The enzyme catalyses inosine + phosphate = alpha-D-ribose 1-phosphate + hypoxanthine. The catalysed reaction is thymidine + phosphate = 2-deoxy-alpha-D-ribose 1-phosphate + thymine. It catalyses the reaction uridine + phosphate = alpha-D-ribose 1-phosphate + uracil. It carries out the reaction xanthosine + phosphate = alpha-D-ribose 1-phosphate + xanthine. Catalyzes the phosphorolysis of diverse nucleosides, yielding D-ribose 1-phosphate and the respective free bases. Can use uridine, adenosine, guanosine, cytidine, thymidine, inosine and xanthosine as substrates. Also catalyzes the reverse reactions. The polypeptide is Pyrimidine/purine nucleoside phosphorylase (Pseudomonas paraeruginosa (strain DSM 24068 / PA7) (Pseudomonas aeruginosa (strain PA7))).